Reading from the N-terminus, the 558-residue chain is Glutamine--tRNA ligase (558 aa).

The short motif at 34–44 is the 'HIGH' region element; sequence PEPNGYLHIGH. ATP is bound by residues 35–37 and 41–47; these read EPN and HIGHAKS. Residues aspartate 67 and tyrosine 212 each contribute to the L-glutamine site. ATP is bound by residues threonine 231, 261–262, and 269–271; these read RL and LSK. Residues 268–272 carry the 'KMSKS' region motif; it reads VLSKR.

The protein belongs to the class-I aminoacyl-tRNA synthetase family. Monomer.

The protein localises to the cytoplasm. It carries out the reaction tRNA(Gln) + L-glutamine + ATP = L-glutaminyl-tRNA(Gln) + AMP + diphosphate. The polypeptide is Glutamine--tRNA ligase (Pseudoalteromonas atlantica (strain T6c / ATCC BAA-1087)).